The following is a 124-amino-acid chain: Kalata-B1 (124 aa).

The N-terminal stretch at 1 to 22 (MAKFTVCLLLCLLLAAFVGAFG) is a signal peptide. Residues 23–88 (SELSDSHKTT…QVFLKQLQLK (66 aa)) constitute a propeptide that is removed on maturation. The segment at residues 89–117 (GLPVCGETCVGGTCNTPGCTCSWPVCTRN) is a cross-link (cyclopeptide (Gly-Asn)). Intrachain disulfides connect Cys93–Cys107, Cys97–Cys109, and Cys102–Cys114. Positions 118–124 (GLPSLAA) are excised as a propeptide.

This sequence belongs to the cyclotide family. Moebius subfamily. Kalata-B1 is a cyclic peptide which occurs in three forms: with unmodified Trp-111, with Trp-111 oxidized to form oxindolylalanine and with Trp-111 oxidized to form N-formylkynurenine. Oxidation is enhanced by exposure to sunlight. In terms of tissue distribution, leaves and stems. Lower in roots.

Functionally, probably participates in a plant defense mechanism. Has antibiotic activity. Has a diuretic effect. Has a uterotonic effect in humans. Active against the Gram-positive S.aureus with a minimum inhibition concentration of approximately 0.2 microM. Relatively ineffective against Gram-negative bacteria such as E.coli and P.aeruginosa. Inhibitory effect on the growth and development of larvae from H.punctigera. The unmodified form has hemolytic activity, the oxidized form lacks hemolytic activity. If the protein is linearized, hemolytic activity is lost. The protein is Kalata-B1 (OAK1) of Oldenlandia affinis.